Reading from the N-terminus, the 78-residue chain is D-alanyl carrier protein (78 aa).

A Carrier domain is found at 1–78 (MEFKNQVYGI…HIAEQLAEMK (78 aa)). At serine 36 the chain carries O-(pantetheine 4'-phosphoryl)serine.

It belongs to the DltC family. In terms of processing, 4'-phosphopantetheine is transferred from CoA to a specific serine of apo-DCP.

The protein resides in the cytoplasm. It functions in the pathway cell wall biogenesis; lipoteichoic acid biosynthesis. Its function is as follows. Carrier protein involved in the D-alanylation of lipoteichoic acid (LTA). The loading of thioester-linked D-alanine onto DltC is catalyzed by D-alanine--D-alanyl carrier protein ligase DltA. The DltC-carried D-alanyl group is further transferred to cell membrane phosphatidylglycerol (PG) by forming an ester bond, probably catalyzed by DltD. D-alanylation of LTA plays an important role in modulating the properties of the cell wall in Gram-positive bacteria, influencing the net charge of the cell wall. The chain is D-alanyl carrier protein from Bacillus pumilus (strain SAFR-032).